Here is a 434-residue protein sequence, read N- to C-terminus: Glutamyl-tRNA reductase (434 aa).

Substrate-binding positions include 52 to 55 (TCNR), Ser115, 120 to 122 (ETQ), and Gln126. Catalysis depends on Cys53, which acts as the Nucleophile. Residue 195–200 (GAGEMI) coordinates NADP(+).

This sequence belongs to the glutamyl-tRNA reductase family. In terms of assembly, homodimer.

It catalyses the reaction (S)-4-amino-5-oxopentanoate + tRNA(Glu) + NADP(+) = L-glutamyl-tRNA(Glu) + NADPH + H(+). It functions in the pathway porphyrin-containing compound metabolism; protoporphyrin-IX biosynthesis; 5-aminolevulinate from L-glutamyl-tRNA(Glu): step 1/2. In terms of biological role, catalyzes the NADPH-dependent reduction of glutamyl-tRNA(Glu) to glutamate 1-semialdehyde (GSA). The chain is Glutamyl-tRNA reductase from Cupriavidus necator (strain ATCC 17699 / DSM 428 / KCTC 22496 / NCIMB 10442 / H16 / Stanier 337) (Ralstonia eutropha).